Reading from the N-terminus, the 359-residue chain is GTP cyclohydrolase FolE2 (359 aa).

This sequence belongs to the GTP cyclohydrolase IV family.

The enzyme catalyses GTP + H2O = 7,8-dihydroneopterin 3'-triphosphate + formate + H(+). It functions in the pathway cofactor biosynthesis; 7,8-dihydroneopterin triphosphate biosynthesis; 7,8-dihydroneopterin triphosphate from GTP: step 1/1. Functionally, converts GTP to 7,8-dihydroneopterin triphosphate. The protein is GTP cyclohydrolase FolE2 of Cereibacter sphaeroides (strain ATCC 17029 / ATH 2.4.9) (Rhodobacter sphaeroides).